The following is a 155-amino-acid chain: Ribosomal RNA large subunit methyltransferase H (155 aa).

Residues Leu-72, Gly-104, and 123–128 (LAKITL) each bind S-adenosyl-L-methionine.

It belongs to the RNA methyltransferase RlmH family. As to quaternary structure, homodimer.

The protein localises to the cytoplasm. It catalyses the reaction pseudouridine(1915) in 23S rRNA + S-adenosyl-L-methionine = N(3)-methylpseudouridine(1915) in 23S rRNA + S-adenosyl-L-homocysteine + H(+). Its function is as follows. Specifically methylates the pseudouridine at position 1915 (m3Psi1915) in 23S rRNA. In Mycoplasma mycoides subsp. mycoides SC (strain CCUG 32753 / NCTC 10114 / PG1), this protein is Ribosomal RNA large subunit methyltransferase H.